The following is a 102-amino-acid chain: Small ribosomal subunit protein uS10 (102 aa).

This sequence belongs to the universal ribosomal protein uS10 family. Part of the 30S ribosomal subunit.

Its function is as follows. Involved in the binding of tRNA to the ribosomes. The protein is Small ribosomal subunit protein uS10 of Brucella abortus (strain S19).